The primary structure comprises 357 residues: Peptide chain release factor 1 (357 aa).

An N5-methylglutamine modification is found at Gln233.

This sequence belongs to the prokaryotic/mitochondrial release factor family. In terms of processing, methylated by PrmC. Methylation increases the termination efficiency of RF1.

The protein localises to the cytoplasm. Its function is as follows. Peptide chain release factor 1 directs the termination of translation in response to the peptide chain termination codons UAG and UAA. The protein is Peptide chain release factor 1 of Enterococcus faecalis (strain ATCC 700802 / V583).